Consider the following 37-residue polypeptide: Large ribosomal subunit protein bL36A (37 aa).

Belongs to the bacterial ribosomal protein bL36 family.

This chain is Large ribosomal subunit protein bL36A, found in Arthrobacter sp. (strain FB24).